The primary structure comprises 473 residues: Myocyte-specific enhancer factor 2C (473 aa).

One can recognise an MADS-box domain in the interval 1-61; the sequence is MGRKKIQITR…NKLFQYASTD (61 aa). Lys4 carries the post-translational modification N6-acetyllysine. Positions 58–86 form a DNA-binding region, mef2-type; it reads ASTDMDKVLLKYTEYNEPHESRTNSDIVE. The residue at position 59 (Ser59) is a Phosphoserine; by CK2. The disordered stretch occupies residues 91 to 116; the sequence is KGLNGCDSPDPDADDSVGHSPESEDK. Residues Ser98, Ser106, and Ser110 each carry the phosphoserine modification. N6-acetyllysine occurs at positions 116 and 119. Positions 180 to 206 are disordered; sequence NSMSPGVTHRPPSAGNTGGLMGGDLTS. Residues Ser222 and Ser228 each carry the phosphoserine modification. Lys234 and Lys239 each carry N6-acetyllysine. Ser240 carries the post-translational modification Phosphoserine. Lys252 and Lys264 each carry N6-acetyllysine. The tract at residues 271-278 is beta domain; the sequence is SEDVDLLL. Thr293 and Thr300 each carry phosphothreonine; by MAPK14. A transcription repressor region spans residues 368-399; the sequence is ACTSTHLSQSSNLSLPSTQSLNIKSEPVSPPR. Residues 375-390 are compositionally biased toward polar residues; the sequence is SQSSNLSLPSTQSLNI. Positions 375-473 are disordered; it reads SQSSNLSLPS…RMRLSEGWAT (99 aa). Residue Lys391 forms a Glycyl lysine isopeptide (Lys-Gly) (interchain with G-Cter in SUMO) linkage. Phosphoserine; by CDK5 is present on Ser396. Ser419 is modified (phosphoserine; by MAPK7). Over residues 419–432 the composition is skewed to low complexity; that stretch reads SPVDSLSSCSSSYD. Residues 433–443 are compositionally biased toward basic and acidic residues; it reads GSDREDHRNEF. At Ser445 the chain carries Phosphoserine.

The protein belongs to the MEF2 family. In terms of assembly, forms a complex with class II HDACs in undifferentiating cells. On myogenic differentiation, HDACs are released into the cytoplasm allowing MEF2s to interact with other proteins for activation. Interacts with EP300 in differentiating cells; the interaction acetylates MEF2C leading to increased DNA binding and activation. Interacts with HDAC7 and CARM1. Interacts with HDAC4 and HDAC9; the interaction with HDACs represses transcriptional activity. Interacts with LPIN1. Interacts with MYOCD. Interacts with AKAP13. Interacts with FOXK1; the interaction inhibits MEF2C transactivation activity. Interacts (via N-terminus) with HABP4; this interaction decreases DNA-binding activity of MEF2C in myocardial cells in response to mechanical stress. Interacts with JPH2; interaction specifically takes place with the Junctophilin-2 N-terminal fragment cleavage product of JPH2. Interacts (via MADS box) with SOX18. Interacts with PHF7; the interaction promotes MEF2C binding to its transcription targets. In terms of processing, phosphorylated on Ser-59; which enhances DNA binding activity. Phosphorylated on Ser-396; which is required for Lys-391 sumoylation and inhibits transcriptional activity. Post-translationally, acetylated by p300 on several sites in diffentiating myocytes. Acetylation on Lys-4 increases DNA binding and transactivation. Sumoylated on Lys-391 with SUMO2 but not SUMO1; which represses transcriptional activity. In terms of processing, proteolytically cleaved in cerebellar granule neurons on several sites by caspase 3 and caspase 7 following neurotoxicity. Preferentially cleaves the CDK5-mediated hyperphosphorylated form which leads to neuron apoptosis and transcriptional inactivation. Expressed in the heart. Expressed in cardiac myocytes (at protein level).

Its subcellular location is the nucleus. It localises to the cytoplasm. The protein localises to the sarcoplasm. Transcription activator which binds specifically to the MEF2 element present in the regulatory regions of many muscle-specific genes. Controls cardiac morphogenesis and myogenesis, and is also involved in vascular development. Enhances transcriptional activation mediated by SOX18. Plays an essential role in hippocampal-dependent learning and memory by suppressing the number of excitatory synapses and thus regulating basal and evoked synaptic transmission. Crucial for normal neuronal development, distribution, and electrical activity in the neocortex. Necessary for proper development of megakaryocytes and platelets and for bone marrow B-lymphopoiesis. Required for B-cell survival and proliferation in response to BCR stimulation, efficient IgG1 antibody responses to T-cell-dependent antigens and for normal induction of germinal center B-cells. May also be involved in neurogenesis and in the development of cortical architecture. The chain is Myocyte-specific enhancer factor 2C from Rattus norvegicus (Rat).